The following is a 463-amino-acid chain: uncharacterized protein (463 aa).

In terms of domain architecture, HTH gntR-type spans 13–81; that stretch reads IPLYQQLYRY…PRSGWFADYH (69 aa). The H-T-H motif DNA-binding region spans 41–60; it reads KRLLANQLSISQTTVERAYE. The residue at position 308 (Lys308) is an N6-(pyridoxal phosphate)lysine.

In the C-terminal section; belongs to the class-I pyridoxal-phosphate-dependent aminotransferase family. Requires pyridoxal 5'-phosphate as cofactor.

This is an uncharacterized protein from Bacillus subtilis (strain 168).